The primary structure comprises 458 residues: MKLQDNLKSIKKELERIKVENWSKENIDKNTYRYIRLFDIDDSLMNQKICFFGWVKSSRSSSKISFIELISQFKIIKCVIPTKVKLTDHTTLKVWGIMKPNNGNDEHQFEIDVQAYEVYGGYQAPSFPLNIHSDKDTLLDLAHLGLRMPHRILFLQAQNELLKALRKFYWNNNYTEITPPTLVQTQVEGGATLFKLNYYDQPAYLTQSSQLYLETVAPVVGKAFCIMPSYRAEKSKTSRHLSEFTHVEAELVDIQFDELMDQIEQLIRSTINEFYKNILPEIKKIDNDFQPVVLSDKQFKKITYEDAIHFLIAQNHKKTDNTDYQLGDDISDASEKFLLETYGENQPIFLIRFPTDHKPFYVAKDQYGTQTCDLLFPGIGEIVGGSMRETNYNNLLDGFKRENIDHEPYSWYLDMAKFGPSPHGGYGLGFERLLMCLMKYKSVDQSTLYCRKPSRCTP.

The protein belongs to the class-II aminoacyl-tRNA synthetase family.

It localises to the cytoplasm. It catalyses the reaction tRNA(Asn) + L-asparagine + ATP = L-asparaginyl-tRNA(Asn) + AMP + diphosphate + H(+). In Enterocytozoon bieneusi (strain H348) (Microsporidian parasite), this protein is Probable asparagine--tRNA ligase, cytoplasmic.